A 539-amino-acid polypeptide reads, in one-letter code: Netrin-G1 (539 aa).

The N-terminal stretch at 1–18 (MYLSRFLSIHALWVTVSS) is a signal peptide. Disulfide bonds link C33/C50, C72/C92, and C80/C88. The Laminin N-terminal domain occupies 46–296 (DYTACQPEST…AISDIKVRGR (251 aa)). The interval 80–91 (CAMGNPYMCNNE) is NGL discriminant loop I. An N-linked (GlcNAc...) asparagine glycan is attached at N133. A disulfide bridge connects residues C182 and C206. The interval 208–214 (EEYSTGY) is NGL discriminant loop II. Residues 273–275 (EIF) form an NGL discriminant loop III region. Disulfide bonds link C297-C306, C299-C315, C317-C326, C329-C354, C364-C373, C366-C384, C387-C396, C399-C417, C420-C432, C422-C438, C440-C449, C452-C462, and C488-C497. Laminin EGF-like domains lie at 297 to 356 (CKCN…TCIP), 364 to 419 (CECF…VCIE), and 420 to 469 (CYCN…VCDN). N-linked (GlcNAc...) asparagine glycosylation is present at N320. Residue N406 is glycosylated (N-linked (GlcNAc...) asparagine). The N-linked (GlcNAc...) asparagine glycan is linked to N433. The GPI-anchor amidated serine moiety is linked to residue S510. A propeptide spans 511–539 (ESGQGAPPRGSPALLLLTMLLGTAGPLVF) (removed in mature form).

Post-translationally, N-glycosylated. In terms of tissue distribution, expression is restricted primarily to neurons of the CNS, particularly in the dorsal thalamus, olfactory bulb and inferior colliculus. Isoform 1A and isoform 1D are the major products in adult brain.

The protein localises to the cell membrane. Involved in controlling patterning and neuronal circuit formation at the laminar, cellular, subcellular and synaptic levels. Promotes neurite outgrowth of both axons and dendrites. The polypeptide is Netrin-G1 (Ntng1) (Mus musculus (Mouse)).